Reading from the N-terminus, the 397-residue chain is Tryptophan synthase beta chain (397 aa).

At Lys86 the chain carries N6-(pyridoxal phosphate)lysine.

The protein belongs to the TrpB family. As to quaternary structure, tetramer of two alpha and two beta chains. The cofactor is pyridoxal 5'-phosphate.

The enzyme catalyses (1S,2R)-1-C-(indol-3-yl)glycerol 3-phosphate + L-serine = D-glyceraldehyde 3-phosphate + L-tryptophan + H2O. Its pathway is amino-acid biosynthesis; L-tryptophan biosynthesis; L-tryptophan from chorismate: step 5/5. In terms of biological role, the beta subunit is responsible for the synthesis of L-tryptophan from indole and L-serine. This chain is Tryptophan synthase beta chain, found in Edwardsiella ictaluri (strain 93-146).